We begin with the raw amino-acid sequence, 171 residues long: uncharacterized protein (171 aa).

Residues 33-166 (AISIATNLYR…LTGLLRKVAD (134 aa)) form the HTH marR-type domain. The H-T-H motif DNA-binding region spans 80 to 103 (TRKIAELSGISTATASNVIKTLEK).

This is an uncharacterized protein from Bacillus subtilis (strain 168).